The chain runs to 198 residues: Segregation and condensation protein B (198 aa).

Residues 169–198 form a disordered region; that stretch reads LADPAAEEPDQNEMDLFFDRFNQSKEQEEE.

The protein belongs to the ScpB family. As to quaternary structure, homodimer. Homodimerization may be required to stabilize the binding of ScpA to the Smc head domains. Component of a cohesin-like complex composed of ScpA, ScpB and the Smc homodimer, in which ScpA and ScpB bind to the head domain of Smc. The presence of the three proteins is required for the association of the complex with DNA.

The protein resides in the cytoplasm. Its function is as follows. Participates in chromosomal partition during cell division. May act via the formation of a condensin-like complex containing Smc and ScpA that pull DNA away from mid-cell into both cell halves. The chain is Segregation and condensation protein B from Listeria monocytogenes serotype 4a (strain HCC23).